Consider the following 265-residue polypeptide: C-type lectin domain family 12 member A (265 aa).

Residues 1–43 are Cytoplasmic-facing; that stretch reads MSEEVTYADLQFQNSSEMEKIPEIGKFGEKAPPAPSHVWRPAA. Positions 5 to 10 match the ITIM motif motif; it reads VTYADL. Tyr7 bears the Phosphotyrosine mark. The helical; Signal-anchor for type II membrane protein transmembrane segment at 44–64 threads the bilayer; the sequence is LFLTLLCLLLLIGLGVLASMF. Residues 65–265 are Extracellular-facing; it reads HVTLKIEMKK…QLGSTYFREA (201 aa). Asn88 and Asn98 each carry an N-linked (GlcNAc...) asparagine glycan. 4 disulfide bridges follow: Cys118/Cys130, Cys133/Cys144, Cys161/Cys248, and Cys227/Cys240. One can recognise a C-type lectin domain in the interval 140–249; that stretch reads HKDSCYFLSD…CTYKKRMICE (110 aa). Asn165 is a glycosylation site (N-linked (GlcNAc...) asparagine).

Homodimer; disulfide-linked. Interacts (when the ITIM motif is phosphorylated) with PTPN6 and PTPN11. In terms of processing, phosphorylated at Tyr-7 by SRC in the ITIM motif following ligand-binding, promoting recruitment of tyrosine-protein phosphatases PTPN6 and PTPN11. Post-translationally, highly N-glycosylated; glycosylation varies between cell types. In terms of tissue distribution, preferentially expressed in lymphoid tissues and immune cells, including natural killer (NK) cells, T-cells, dendritic cells and monocytes or macrophages. Detected in spleen macrophage-rich red pulp and in lymph node (at protein level). Detected in peripheral blood leukocytes, dendritic cells, bone marrow, monocytes, mononuclear leukocytes and macrophages.

It localises to the cell membrane. Functionally, myeloid inhibitory C-type lectin receptor that acts as a negative regulator of myeloid cell activation. Myeloid cell inhibition is required to limit proinflammatory pathways and protect against excessive inflammation. Specifically recognizes and binds various structures, such as neutrophil extracellular traps (NETs) or monosodium urate crystals. Also acts as a pattern-recognition receptor for pathogen-associated molecules, such as plasmodium hemozoin or mycobacterial micolic acid. Ligand-binding induces phosphorylation of its ITIM motif, followed by recruitment of tyrosine-protein phosphatases PTPN6 and PTPN11, which counteract tyrosine-protein kinase SYK, thereby preventing myeloid cell activation. Acts as a pattern-recognition receptor for NETs in neutrophils: specifically recognizes DNA in NETs, leading to inhibit neutrophil activation and limit further NET formation. This regulation is essential for controlling key neutrophil responses and limit NET-mediated inflammatory conditions. Also recognizes dead cells by acting as a receptor for monosodium urate crystals, leading to down-regulate neutrophil activation. Binding to monosodium urate crystals also promotes the type I interferon response. Acts as an inhibitor of natural killer (NK) cell cytotoxicity. Also acts as an ihibitor of dendritic cell maturation in an IL10-dependent manner. This is C-type lectin domain family 12 member A from Homo sapiens (Human).